The sequence spans 294 residues: Beta-lactamase SME-1 (294 aa).

Positions 1 to 27 (MSNKVNFKTASFLFSVCLALSAFNAHA) are cleaved as a signal peptide. A disulfide bridge links C72 with C242. S73 functions as the Nucleophile; acyl-ester intermediate in the catalytic mechanism. Positions 73, 76, 133, and 135 each coordinate a beta-lactam. Catalysis depends on E172, which acts as the Proton acceptor. T239 lines the a beta-lactam pocket.

This sequence belongs to the class-A beta-lactamase family.

It carries out the reaction a beta-lactam + H2O = a substituted beta-amino acid. Its activity is regulated as follows. Partially inhibited by the beta-lactamase-blocking agents, clavulanic acid and tazobactam. Not inhibited by EDTA. Class A beta-lactamase which confers resistance to the beta-lactam antibiotics, including penicillins, some cephalosporins and carbapenems, to JM109 strain E.coli. Acts via hydrolysis of the beta-lactam ring. Has penicillin-, cephalosporin- and carbapenem-hydrolyzing activities. The polypeptide is Beta-lactamase SME-1 (Serratia marcescens).